The sequence spans 387 residues: Mitogen-activated protein kinase homolog MMK1 (387 aa).

Positions 55-340 (KPPIMPIGKG…VEDALAHPYL (286 aa)) constitute a Protein kinase domain. ATP-binding positions include 61–69 (IGKGAYGIV) and Lys-84. The Proton acceptor role is filled by Asp-181. Thr-213 carries the post-translational modification Phosphothreonine. Residues 213–215 (TEY) carry the TXY motif. Tyr-215 is subject to Phosphotyrosine.

The protein belongs to the protein kinase superfamily. CMGC Ser/Thr protein kinase family. MAP kinase subfamily. Mg(2+) serves as cofactor. Dually phosphorylated on Thr-213 and Tyr-215, which activates the enzyme. Autophosphorylated. As to expression, roots and stems.

The enzyme catalyses L-seryl-[protein] + ATP = O-phospho-L-seryl-[protein] + ADP + H(+). It catalyses the reaction L-threonyl-[protein] + ATP = O-phospho-L-threonyl-[protein] + ADP + H(+). Activated by tyrosine and threonine phosphorylation. In terms of biological role, may play a role in the mitogenic induction of symbiotic root nodules on Alfalfa by Rhizobium signal molecules. In Medicago sativa (Alfalfa), this protein is Mitogen-activated protein kinase homolog MMK1 (MMK1).